The primary structure comprises 378 residues: Palmitoyltransferase PFA4 (378 aa).

Topologically, residues 1-9 are cytoplasmic; sequence MPVKLRWPW. A helical membrane pass occupies residues 10–30; the sequence is LGIAIPTFLISFIGYGAHYFI. The Lumenal segment spans residues 31–40; sequence LSNFLSVPKQ. The chain crosses the membrane as a helical span at residues 41-61; it reads ITFEFCLSMIWLSYYLAICTN. At 62 to 119 the chain is on the cytoplasmic side; the sequence is PGRPLPNYKPPPDIWRNFCKKCQSYKPERSHHCKTCNQCVLMMDHHCPWTMNCVGFAN. One can recognise a DHHC domain in the interval 78 to 128; sequence NFCKKCQSYKPERSHHCKTCNQCVLMMDHHCPWTMNCVGFANYPHFLRFLF. The active-site S-palmitoyl cysteine intermediate is Cys108. Residues 120–140 form a helical membrane-spanning segment; sequence YPHFLRFLFWIIVTTSVLFCI. Over 141–164 the chain is Lumenal; the sequence is QAKRIYFIWQQRHLPGYFFKKSEL. Residues 165 to 185 traverse the membrane as a helical segment; the sequence is IFLTISSPLNSFVLLTITILF. Residues 186–378 lie on the Cytoplasmic side of the membrane; sequence LRCLFNQILN…DDFGVDVDME (193 aa).

The protein belongs to the DHHC palmitoyltransferase family. PFA4 subfamily. In terms of processing, autopalmitoylated.

The protein localises to the endoplasmic reticulum membrane. It carries out the reaction L-cysteinyl-[protein] + hexadecanoyl-CoA = S-hexadecanoyl-L-cysteinyl-[protein] + CoA. Functionally, mediates the reversible addition of palmitate to target proteins, thereby regulating their membrane association and biological function. Palmitoylates several amino acid permeases. Palmitoylates chitin synthase CHS3, which is required for its proper export from the ER. Can palmitoylate RAS2 in vitro. This is Palmitoyltransferase PFA4 from Saccharomyces cerevisiae (strain ATCC 204508 / S288c) (Baker's yeast).